The primary structure comprises 998 residues: Collagen alpha-1(I) chain (998 aa).

The tract at residues 1-998 is disordered; the sequence is SYGYDEKGGV…GPPGPPGPPG (998 aa). Residues 9–22 show a composition bias toward low complexity; that stretch reads GVSVPGPMGPSGPR. 4-hydroxyproline occurs at positions 25, 28, 30, 39, 42, 45, 59, 74, 80, 89, and 95. The span at 62-76 shows a compositional bias: basic and acidic residues; the sequence is NGDDGEAGKPGRPGE. Lys-98 carries the post-translational modification 5-hydroxylysine; alternate. O-linked (Gal...) hydroxylysine; alternate glycosylation occurs at Lys-98. Position 104 is a phosphoserine (Ser-104). Residues 112 to 128 are compositionally biased toward low complexity; the sequence is DAGPAGPKGEPGSPGEN. A 4-hydroxyproline mark is found at Pro-122, Pro-125, Pro-131, Pro-140, Pro-146, Pro-167, Pro-176, Pro-179, Pro-206, Pro-209, Pro-221, Pro-227, Pro-236, Pro-242, Pro-245, and Pro-260. The span at 146–164 shows a compositional bias: low complexity; the sequence is PGASGPAGARGNDGATGAA. Over residues 166-178 the composition is skewed to pro residues; it reads PPGPTGPAGPPGF. Over residues 212 to 251 the composition is skewed to low complexity; it reads AGAAGPAGNPGADGQPGAKGANGAPGIAGAPGFPGARGPS. Lys-263 bears the 5-hydroxylysine mark. Pro-269, Pro-272, Pro-284, Pro-293, Pro-308, Pro-314, Pro-323, and Pro-329 each carry 4-hydroxyproline. Over residues 318–327 the composition is skewed to gly residues; the sequence is GERGGPGSRG. 5-hydroxylysine is present on Lys-338. A 4-hydroxyproline mark is found at Pro-347, Pro-356, Pro-362, Pro-368, Pro-377, Pro-380, Pro-389, Pro-398, Pro-404, Pro-416, Pro-425, Pro-434, Pro-437, Pro-455, Pro-472, Pro-478, Pro-484, Pro-490, Pro-496, Pro-502, Pro-514, Pro-523, Pro-537, Pro-543, and Pro-552. The span at 371-397 shows a compositional bias: low complexity; the sequence is KGLTGSPGSPGPDGKTGPPGPAGQDGR. Over residues 406 to 425 the composition is skewed to low complexity; the sequence is ARGQAGVMGFPGPKGAAGEP. Low complexity predominate over residues 484–493; sequence PGEAGKPGEQ. 5-hydroxylysine is present on Lys-564. A 4-hydroxyproline mark is found at Pro-570, Pro-585, and Pro-591. The segment covering 597–611 has biased composition (low complexity); that stretch reads SGPSGPAGPTGARGA. Phosphoserine is present on Ser-600. 8 positions are modified to 4-hydroxyproline: Pro-612, Pro-618, Pro-621, Pro-630, Pro-636, Pro-654, Pro-663, and Pro-672. Residues 624-651 show a composition bias toward low complexity; it reads AGFAGPPGADGQPGAKGEPGDAGAKGDA. Positions 653 to 665 are enriched in pro residues; sequence PPGPAGPTGPPGP. 5-hydroxylysine is present on Lys-675. Residues 680–696 are compositionally biased toward low complexity; the sequence is SAGPPGATGFPGAAGRV. A 4-hydroxyproline mark is found at Pro-684 and Pro-690. A 3-hydroxyproline modification is found at Pro-698. Residues Pro-699, Pro-708, Pro-711, Pro-732, Pro-741, Pro-749, Pro-758, Pro-776, Pro-785, Pro-788, Pro-794, Pro-809, Pro-815, Pro-821, Pro-830, and Pro-836 each carry the 4-hydroxyproline modification. Positions 725-734 are enriched in low complexity; sequence ETGPAGRPGE. Low complexity predominate over residues 746–758; the sequence is KGSPGADGPAGAP. A compositionally biased stretch (pro residues) spans 808–818; sequence PPGPMGPPGLA. Lys-845 carries the 5-hydroxylysine modification. Over residues 853–868 the composition is skewed to pro residues; the sequence is PGPPGAPGAPGAPGPV. Pro-856, Pro-859, and Pro-862 each carry 4-hydroxyproline. Residues 889–903 show a composition bias toward low complexity; the sequence is AGPAGARGPAGPQGP. Basic and acidic residues predominate over residues 904-918; sequence RGDKGETGEQGDRGI. Lys-907 carries the post-translational modification 5-hydroxylysine. 5-hydroxylysine; alternate is present on Lys-919. Residue Lys-919 is glycosylated (O-linked (Gal...) hydroxylysine; alternate). 4-hydroxyproline occurs at positions 934, 937, 955, and 970. Low complexity predominate over residues 937-970; the sequence is PGEQGPSGASGPAGPRGPPGSAGSPGKDGLNGLP. Position 975 is a 3-hydroxyproline (Pro-975). Pro-976 is modified (4-hydroxyproline). Positions 988–998 are enriched in pro residues; sequence VGPPGPPGPPG. Pro-990 is modified (3-hydroxyproline). Pro-991 is subject to 4-hydroxyproline. 3-hydroxyproline is present on Pro-993. Pro-994 is modified (4-hydroxyproline). 3-hydroxyproline is present on Pro-996. At Pro-997 the chain carries 4-hydroxyproline.

The protein belongs to the fibrillar collagen family. Trimers of one alpha 2(I) and two alpha 1(I) chains. Post-translationally, contains mostly 4-hydroxyproline. Proline residues at the third position of the tripeptide repeating unit (G-X-Y) are hydroxylated in some or all of the chains. In terms of processing, contains 3-hydroxyproline at a few sites. This modification occurs on the first proline residue in the sequence motif Gly-Pro-Hyp, where Hyp is 4-hydroxyproline. Lysine residues at the third position of the tripeptide repeating unit (G-X-Y) are 5-hydroxylated in some or all of the chains. Post-translationally, O-glycosylated on hydroxylated lysine residues. The O-linked glycan consists of a Glc-Gal disaccharide. In terms of tissue distribution, expressed in bones.

The protein resides in the secreted. The protein localises to the extracellular space. It localises to the extracellular matrix. Its function is as follows. Type I collagen is a member of group I collagen (fibrillar forming collagen). The chain is Collagen alpha-1(I) chain from Nothrotheriops shastensis (Shasta ground sloth).